Here is a 1214-residue protein sequence, read N- to C-terminus: NBPF family member NBPF1 (1214 aa).

The stretch at 70 to 128 forms a coiled coil; it reads MLRNERQFKEEKLAEQLKQAEELRQYKVLVHSQERELTQLREKLREGRDASRSLNQHLQ. The disordered stretch occupies residues 162–200; that stretch reads LSPENDEDEDEDVQVEEAEKVLESSAPREVQKAEESKVP. A compositionally biased stretch (acidic residues) spans 165–177; that stretch reads ENDEDEDEDVQVE. An Olduvai 1 domain is found at 165–259; it reads ENDEDEDEDV…ECQDAVNILP (95 aa). Positions 190-200 are enriched in basic and acidic residues; the sequence is EVQKAEESKVP. Positions 292-399 form a coiled coil; that stretch reads NEKLHPQLAE…ASRSLNQHLQ (108 aa). A disordered region spans residues 433-471; the sequence is LSPENDEDEDEDVQVEEAEKVLESSAPREVQKAEESKVP. Over residues 436 to 448 the composition is skewed to acidic residues; the sequence is ENDEDEDEDVQVE. Residues 436 to 530 form the Olduvai 2 domain; that stretch reads ENDEDEDEDV…ECQDAVNILP (95 aa). The segment covering 461–471 has biased composition (basic and acidic residues); it reads EVQKAEESKVP. Residues 610–670 are a coiled coil; the sequence is KSMLRNERQF…ASCSLNQHLQ (61 aa). Olduvai domains lie at 707–799, 800–888, 891–946, 947–1038, 1041–1114, and 1116–1214; these read ENDN…HIIP, ENES…ATGP, SREL…LDMD, EIEK…PPCP, SREL…RSTK, and RRRR…IFPQ. Disordered regions lie at residues 722–746 and 791–837; these read EKVQ…EDSL and WEDA…EGYS. 2 stretches are compositionally biased toward acidic residues: residues 801–810 and 821–833; these read NESDDEEEEE and ESEE…ESWD. The segment covering 1102–1121 has biased composition (basic residues); that stretch reads GKGKKRRGRRSTKKRRRRGR. The tract at residues 1102 to 1136 is disordered; that stretch reads GKGKKRRGRRSTKKRRRRGRKEGEEDQNPPCPRLS.

It belongs to the NBPF family. As to expression, widely expressed. The only tissue which shows a weak expression is kidney.

The protein resides in the cytoplasm. The chain is NBPF family member NBPF1 from Homo sapiens (Human).